A 186-amino-acid chain; its full sequence is Glutathione S-transferase 1, isoform A (186 aa).

The region spanning 1–81 (MDFYYLPGSA…YLVEKYCAHD (81 aa)) is the GST N-terminal domain. Residues S9, 50–52 (HCI), and 65–67 (ESR) each bind glutathione. The GST C-terminal domain maps to 92 to 186 (DPRRRAVVHQ…RRCRVRSAAI (95 aa)).

The protein belongs to the GST superfamily. Theta family. Homodimer.

The catalysed reaction is RX + glutathione = an S-substituted glutathione + a halide anion + H(+). In terms of biological role, conjugation of reduced glutathione to a wide number of exogenous and endogenous hydrophobic electrophiles. This chain is Glutathione S-transferase 1, isoform A, found in Anopheles gambiae (African malaria mosquito).